A 49-amino-acid chain; its full sequence is Astexin-2 (49 aa).

Positions 1-25 are excised as a propeptide; the sequence is MTKRTTIAARRVGLIDLGKATRQTK. The segment at residues 26–34 is a cross-link (isoaspartyl glycine isopeptide (Gly-Asp)); the sequence is GLTQIQALD.

In terms of processing, this lasso peptide is hydrolyzed to a linear form by the isopeptidase AtxE2, in vitro. The isopeptidase AtxE2 only recognizes the threaded form (but not the unthreaded form).

The protein localises to the cytoplasm. It localises to the secreted. Shows weak antimicrobial activity against its phylogenetic relative Caulobacter crescentus. Does not show activity against other bacteria tested (E.coli, Vibrio sp, Burkhoderia thailandensis, and Salmonella newport). The polypeptide is Astexin-2 (Asticcacaulis excentricus (strain ATCC 15261 / DSM 4724 / KCTC 12464 / NCIMB 9791 / VKM B-1370 / CB 48)).